The following is an 886-amino-acid chain: Valine--tRNA ligase (886 aa).

A 'HIGH' region motif is present at residues 43-53; that stretch reads PYPTGRMHLGH. The 'KMSKS' region signature appears at 528 to 532; it reads KMSKS. ATP is bound at residue K531.

This sequence belongs to the class-I aminoacyl-tRNA synthetase family. ValS type 2 subfamily.

It localises to the cytoplasm. The catalysed reaction is tRNA(Val) + L-valine + ATP = L-valyl-tRNA(Val) + AMP + diphosphate. In terms of biological role, catalyzes the attachment of valine to tRNA(Val). As ValRS can inadvertently accommodate and process structurally similar amino acids such as threonine, to avoid such errors, it has a 'posttransfer' editing activity that hydrolyzes mischarged Thr-tRNA(Val) in a tRNA-dependent manner. This is Valine--tRNA ligase from Methanococcus maripaludis (strain DSM 14266 / JCM 13030 / NBRC 101832 / S2 / LL).